A 371-amino-acid chain; its full sequence is Probable trehalose-phosphate phosphatase 1 (371 aa).

This sequence belongs to the trehalose phosphatase family. The cofactor is a divalent metal cation. In terms of tissue distribution, expressed in roots and shoots.

It carries out the reaction alpha,alpha-trehalose 6-phosphate + H2O = alpha,alpha-trehalose + phosphate. Its pathway is glycan biosynthesis; trehalose biosynthesis. In terms of biological role, removes the phosphate from trehalose 6-phosphate to produce free trehalose. Trehalose accumulation in plant improves abiotic stress tolerance. The protein is Probable trehalose-phosphate phosphatase 1 (TPP1) of Oryza sativa subsp. japonica (Rice).